Reading from the N-terminus, the 401-residue chain is Heat stress transcription factor A-4a (401 aa).

The DNA-binding element occupies 13 to 107 (LPPFLTKTYE…LMKNIHRRKP (95 aa)). The interval 122–188 (PLTDSERVRM…TMVSFVSQVL (67 aa)) is hydrophobic repeat HR-A/B. The short motif at 207 to 213 (RKRRFPR) is the Nuclear localization signal element. The AHA1 signature appears at 256–265 (IAIWENLVSD). Positions 341-350 (DGFWQQFFSE) match the AHA2 motif. The segment at 351-373 (NPGSTEQREVQLERKDDKDKAGV) is disordered. The span at 356 to 373 (EQREVQLERKDDKDKAGV) shows a compositional bias: basic and acidic residues. Residues 388–395 (ITEQLGHL) carry the Nuclear export signal motif.

The protein belongs to the HSF family. Class A subfamily. Homotrimer. In terms of processing, exhibits temperature-dependent phosphorylation.

It is found in the cytoplasm. Its subcellular location is the nucleus. In terms of biological role, transcriptional activator that specifically binds DNA sequence 5'-AGAAnnTTCT-3' known as heat shock promoter elements (HSE). The sequence is that of Heat stress transcription factor A-4a (HSFA4A) from Arabidopsis thaliana (Mouse-ear cress).